The following is a 218-amino-acid chain: 3,4-dihydroxy-2-butanone 4-phosphate synthase (218 aa).

D-ribulose 5-phosphate-binding positions include 38–39 (RE), Asp-43, 151–155 (RRGHT), and Glu-175. Position 39 (Glu-39) interacts with Mg(2+). A Mg(2+)-binding site is contributed by His-154.

It belongs to the DHBP synthase family. In terms of assembly, homodimer. Mg(2+) serves as cofactor. It depends on Mn(2+) as a cofactor.

The catalysed reaction is D-ribulose 5-phosphate = (2S)-2-hydroxy-3-oxobutyl phosphate + formate + H(+). It functions in the pathway cofactor biosynthesis; riboflavin biosynthesis; 2-hydroxy-3-oxobutyl phosphate from D-ribulose 5-phosphate: step 1/1. Its function is as follows. Catalyzes the conversion of D-ribulose 5-phosphate to formate and 3,4-dihydroxy-2-butanone 4-phosphate. The polypeptide is 3,4-dihydroxy-2-butanone 4-phosphate synthase (Vibrio cholerae serotype O1 (strain ATCC 39541 / Classical Ogawa 395 / O395)).